The following is a 1004-amino-acid chain: Glycine dehydrogenase (decarboxylating), mitochondrial (1004 aa).

K738 is subject to N6-(pyridoxal phosphate)lysine.

Belongs to the GcvP family. Homodimer. Interacts with GCSH. The glycine cleavage system is composed of four proteins: P (GLDC), T (GCST), L (DLD) and H (GCSH). Requires pyridoxal 5'-phosphate as cofactor. Liver (at protein level).

It is found in the mitochondrion. The enzyme catalyses N(6)-[(R)-lipoyl]-L-lysyl-[glycine-cleavage complex H protein] + glycine + H(+) = N(6)-[(R)-S(8)-aminomethyldihydrolipoyl]-L-lysyl-[glycine-cleavage complex H protein] + CO2. With respect to regulation, stimulated by lipoic acid. Inhibited in presence of methylamine. Its function is as follows. The glycine cleavage system catalyzes the degradation of glycine. The P protein (GLDC) binds the alpha-amino group of glycine through its pyridoxal phosphate cofactor; CO(2) is released and the remaining methylamine moiety is then transferred to the lipoamide cofactor of the H protein (GCSH). This Gallus gallus (Chicken) protein is Glycine dehydrogenase (decarboxylating), mitochondrial.